Consider the following 418-residue polypeptide: D-amino acid dehydrogenase (418 aa).

3–17 (VTILGAGVVGVTSAW) contacts FAD.

This sequence belongs to the DadA oxidoreductase family. FAD is required as a cofactor.

It catalyses the reaction a D-alpha-amino acid + A + H2O = a 2-oxocarboxylate + AH2 + NH4(+). Its pathway is amino-acid degradation; D-alanine degradation; NH(3) and pyruvate from D-alanine: step 1/1. Functionally, oxidative deamination of D-amino acids. The chain is D-amino acid dehydrogenase from Agrobacterium fabrum (strain C58 / ATCC 33970) (Agrobacterium tumefaciens (strain C58)).